We begin with the raw amino-acid sequence, 146 residues long: UPF0735 ACT domain-containing protein Cbei_1295 (146 aa).

The ACT domain occupies 70–145 (TYNIIFKNEK…NVEKVEFIGM (76 aa)).

The protein belongs to the UPF0735 family.

The sequence is that of UPF0735 ACT domain-containing protein Cbei_1295 from Clostridium beijerinckii (strain ATCC 51743 / NCIMB 8052) (Clostridium acetobutylicum).